The chain runs to 311 residues: uncharacterized protein (311 aa).

This is an uncharacterized protein from Bacillus subtilis (strain 168).